Here is a 178-residue protein sequence, read N- to C-terminus: Nicotinamide-nucleotide adenylyltransferase (178 aa).

Belongs to the archaeal NMN adenylyltransferase family.

The protein resides in the cytoplasm. The catalysed reaction is beta-nicotinamide D-ribonucleotide + ATP + H(+) = diphosphate + NAD(+). Its pathway is cofactor biosynthesis; NAD(+) biosynthesis; NAD(+) from nicotinamide D-ribonucleotide: step 1/1. This Pyrobaculum aerophilum (strain ATCC 51768 / DSM 7523 / JCM 9630 / CIP 104966 / NBRC 100827 / IM2) protein is Nicotinamide-nucleotide adenylyltransferase.